Here is a 196-residue protein sequence, read N- to C-terminus: CASP-like protein 1D1 (196 aa).

Residues 1–18 show a composition bias toward basic and acidic residues; that stretch reads MASTDKPDRESIKSEEAP. Residues 1–22 are disordered; sequence MASTDKPDRESIKSEEAPAAHP. Topologically, residues 1–29 are cytoplasmic; it reads MASTDKPDRESIKSEEAPAAHPRRSNYSS. The chain crosses the membrane as a helical span at residues 30-50; sequence VHVALRFLLFAASVTAVVVMV. Topologically, residues 51–84 are extracellular; sequence TAKQTKIVPVPGLPISVPLEAKFSDSPAFLYFIS. Residues 85–105 form a helical membrane-spanning segment; sequence ALSVAGLYGILTTLAAISIVL. The Cytoplasmic portion of the chain corresponds to 106–112; it reads KPAYATR. The helical transmembrane segment at 113–133 threads the bilayer; the sequence is FLLHFALLDVLMLGIVASATG. Over 134–167 the chain is Extracellular; that stretch reads AAGGVAYVGLKGNSHVRWGKVCNVYDKFCQHVGS. A helical membrane pass occupies residues 168–188; that stretch reads SIAVALFASVLLVLLTMLSVF. The Cytoplasmic portion of the chain corresponds to 189–196; the sequence is SIYRKIPK.

It belongs to the Casparian strip membrane proteins (CASP) family. In terms of assembly, homodimer and heterodimers.

Its subcellular location is the cell membrane. This is CASP-like protein 1D1 from Populus trichocarpa (Western balsam poplar).